The sequence spans 185 residues: Ribosome-recycling factor (185 aa).

Residues 138-159 form a disordered region; that stretch reads KVKKLEKDKEISEDESKKAQEQ.

This sequence belongs to the RRF family.

The protein resides in the cytoplasm. Its function is as follows. Responsible for the release of ribosomes from messenger RNA at the termination of protein biosynthesis. May increase the efficiency of translation by recycling ribosomes from one round of translation to another. The protein is Ribosome-recycling factor of Helicobacter acinonychis (strain Sheeba).